The sequence spans 428 residues: Beta-1,3-galactosyl-O-glycosyl-glycoprotein beta-1,6-N-acetylglucosaminyltransferase (428 aa).

At 1 to 9 (MLRNLFRRR) the chain is on the cytoplasmic side. The segment at 5–9 (LFRRR) is mediates interaction with GOLPH3 and is necessary and sufficient for localization to the Golgi. Residues 10–32 (LFSCPTKYYFMLLVLSLITFSVL) form a helical; Signal-anchor for type II membrane protein membrane-spanning segment. The tract at residues 33–121 (RIHQKPEFFS…EPLTKEEVGF (89 aa)) is stem region. At 33–428 (RIHQKPEFFS…RHKALENLEH (396 aa)) the chain is on the lumenal side. N58 and N95 each carry an N-linked (GlcNAc...) asparagine glycan. Disulfide bonds link C59–C413, C100–C172, C151–C199, and C372–C381. The tract at residues 122 to 428 (PIAYSIVVHH…RHKALENLEH (307 aa)) is catalytic. Residues 128 to 130 (VVH), 155 to 157 (DRK), and Y187 each bind UDP-N-acetyl-alpha-D-glucosamine. A glycoprotein is bound by residues E243, N250, K251, R254, E320, K341, and Y358. E320 (nucleophile) is an active-site residue. 2 residues coordinate UDP-N-acetyl-alpha-D-glucosamine: R378 and K401.

It belongs to the glycosyltransferase 14 family. Interacts with GOLPH3; may control GCNT1 retention in the Golgi. In terms of processing, N-glycosylated. In terms of tissue distribution, expressed in kidney, liver, stomach, spleen, lung and brain.

The protein localises to the golgi apparatus membrane. The catalysed reaction is a 3-O-[beta-D-galactosyl-(1-&gt;3)-N-acetyl-alpha-D-galactosaminyl]-L-seryl-[protein] + UDP-N-acetyl-alpha-D-glucosamine = 3-O-{beta-D-galactosyl-(1-&gt;3)-[N-acetyl-beta-D-glucosaminyl-(1-&gt;6)]-N-acetyl-alpha-D-galactosaminyl}-L-seryl-[protein] + UDP + H(+). The enzyme catalyses a 3-O-[beta-D-galactosyl-(1-&gt;3)-N-acetyl-alpha-D-galactosaminyl]-L-threonyl-[protein] + UDP-N-acetyl-alpha-D-glucosamine = a 3-O-{beta-D-galactosyl-(1-&gt;3)-[N-acetyl-beta-D-glucosaminyl-(1-&gt;6)]-N-acetyl-alpha-D-galactosaminyl}-L-threonyl-[protein] + UDP + H(+). It carries out the reaction a globoside GalGb4Cer + UDP-N-acetyl-alpha-D-glucosamine = a globoside GlcNAc-(beta1-&gt;6)-GalGb4Cer + UDP + H(+). It catalyses the reaction a ganglioside GA1 + UDP-N-acetyl-alpha-D-glucosamine = a ganglioside beta-D-GlcNAc-(1-&gt;6)-GA1 + UDP + H(+). It functions in the pathway protein modification; protein glycosylation. The protein operates within glycolipid biosynthesis. Its activity is regulated as follows. Inactivated by thiol-reactive agents. Inhibited by free UDP. Functionally, glycosyltransferase that catalyzes the transfer of an N-acetylglucosamine (GlcNAc) moiety in beta1-6 linkage from UDP-GlcNAc onto mucin-type core 1 O-glycan to form the branched mucin-type core 2 O-glycan. The catalysis is metal ion-independent and occurs with inversion of the anomeric configuration of sugar donor. Selectively involved in synthesis of mucin-type core 2 O-glycans that serve as scaffolds for the display of selectin ligand sialyl Lewis X epitope by myeloid cells, with an impact on homeostasis and recruitment to inflammatory sites. Can also act on glycolipid substrates. Transfers GlcNAc moiety to GalGb4Cer globosides in a reaction step to the synthesis of stage-specific embryonic antigen 1 (SSEA-1) determinant. Can use Galbeta1-3GalNAcalpha1-R and Galbeta1-3GalNAcbeta1-R oligosaccharide derivatives as acceptor substrates. The chain is Beta-1,3-galactosyl-O-glycosyl-glycoprotein beta-1,6-N-acetylglucosaminyltransferase (Gcnt1) from Mus musculus (Mouse).